Here is a 582-residue protein sequence, read N- to C-terminus: Calcium-dependent protein kinase 24 (582 aa).

The tract at residues 1 to 36 (MGSCVSSPLKGSPFGKRPVRRRHSSNSRTSSVPRFD) is disordered. Residue G2 is the site of N-myristoyl glycine attachment. The region spanning 66–324 (YDLGKELGRG…VQEVLEHPWI (259 aa)) is the Protein kinase domain. Residues 72-80 (LGRGEFGVT) and K95 each bind ATP. The active-site Proton acceptor is D190. Position 230 is a phosphoserine (S230). An autoinhibitory domain region spans residues 330 to 360 (APNVNLGDNVRTKIQQFLLMNRFKKKVLRIV). EF-hand domains lie at 367–402 (EEIA…IGQV), 403–438 (VPDG…LKRM), 439–474 (GCDE…DKLG), and 478–513 (GNDQ…GTDW). Ca(2+) is bound by residues D380, D382, N384, H386, E391, D416, D418, N420, M422, E427, D452, N454, N456, E463, D491, N493, D495, and R497. S499 is subject to Phosphoserine. E502 is a binding site for Ca(2+).

This sequence belongs to the protein kinase superfamily. Ser/Thr protein kinase family. CDPK subfamily.

Its subcellular location is the membrane. The catalysed reaction is L-seryl-[protein] + ATP = O-phospho-L-seryl-[protein] + ADP + H(+). The enzyme catalyses L-threonyl-[protein] + ATP = O-phospho-L-threonyl-[protein] + ADP + H(+). Activated by calcium. Autophosphorylation may play an important role in the regulation of the kinase activity. Its function is as follows. May play a role in signal transduction pathways that involve calcium as a second messenger. The chain is Calcium-dependent protein kinase 24 (CPK24) from Arabidopsis thaliana (Mouse-ear cress).